Here is a 355-residue protein sequence, read N- to C-terminus: Protein RecA (355 aa).

ATP is bound at residue 65–72 (GPESSGKT).

It belongs to the RecA family.

The protein localises to the cytoplasm. Functionally, can catalyze the hydrolysis of ATP in the presence of single-stranded DNA, the ATP-dependent uptake of single-stranded DNA by duplex DNA, and the ATP-dependent hybridization of homologous single-stranded DNAs. It interacts with LexA causing its activation and leading to its autocatalytic cleavage. This Pseudomonas putida (strain ATCC 47054 / DSM 6125 / CFBP 8728 / NCIMB 11950 / KT2440) protein is Protein RecA.